The following is a 621-amino-acid chain: DnaJ homolog subfamily C member 2 (621 aa).

Position 1 is an N-acetylmethionine (M1). 4 positions are modified to phosphoserine: S47, S49, S60, and S63. In terms of domain architecture, J spans 88 to 161; that stretch reads DHYAVLGLGH…VKRRAFNSVD (74 aa). The segment at 160–250 is ZRF1-UBD; the sequence is VDPTFDNSVP…RDERRWIEKQ (91 aa). Residue S183 is modified to Phosphoserine. 2 disordered regions span residues 294–315 and 427–453; these read EKKA…QRQA and EEAE…GSKN. 2 consecutive SANT domains span residues 449–511 and 549–604; these read NGSK…KLDP and TDFT…EMVK.

In terms of assembly, component of ribosome-associated complex (RAC), a heterodimer composed of Hsp70/DnaK-type chaperone HSPA14 and Hsp40/DnaJ-type chaperone DNAJC2. Interacts (via ZRF1-UBD region) with ID1. In terms of processing, phosphorylated in M (mitotic) phase.

The protein localises to the nucleus. Its subcellular location is the cytoplasm. It localises to the cytosol. Functionally, acts both as a chaperone in the cytosol and as a chromatin regulator in the nucleus. When cytosolic, acts as a molecular chaperone: component of the ribosome-associated complex (RAC), a complex involved in folding or maintaining nascent polypeptides in a folding-competent state. In the RAC complex, stimulates the ATPase activity of the ribosome-associated pool of Hsp70-type chaperones HSPA14 that bind to the nascent polypeptide chain. When nuclear, mediates the switching from polycomb-repressed genes to an active state: specifically recruited at histone H2A ubiquitinated at 'Lys-119' (H2AK119ub), and promotes the displacement of the polycomb PRC1 complex from chromatin, thereby facilitating transcription activation. The polypeptide is DnaJ homolog subfamily C member 2 (DNAJC2) (Macaca fascicularis (Crab-eating macaque)).